We begin with the raw amino-acid sequence, 293 residues long: tRNA pseudouridine synthase B (293 aa).

Asp40 functions as the Nucleophile in the catalytic mechanism.

Belongs to the pseudouridine synthase TruB family. Type 1 subfamily.

It catalyses the reaction uridine(55) in tRNA = pseudouridine(55) in tRNA. In terms of biological role, responsible for synthesis of pseudouridine from uracil-55 in the psi GC loop of transfer RNAs. In Mycolicibacterium paratuberculosis (strain ATCC BAA-968 / K-10) (Mycobacterium paratuberculosis), this protein is tRNA pseudouridine synthase B.